Reading from the N-terminus, the 1180-residue chain is Pesticidal crystal protein Cry4Aa (1180 aa).

Belongs to the delta endotoxin family.

Functionally, promotes colloidosmotic lysis by binding to the midgut epithelial cells of insects. The protein is Pesticidal crystal protein Cry4Aa (cry4Aa) of Bacillus thuringiensis subsp. israelensis.